The primary structure comprises 20 residues: Outer membrane protein 40Va (20 aa).

It belongs to the Gram-negative porin family. Homotrimer.

It is found in the cell outer membrane. Its function is as follows. Forms pores that allow passive diffusion of small molecules across the outer membrane. In Vibrio alginolyticus, this protein is Outer membrane protein 40Va.